A 211-amino-acid polypeptide reads, in one-letter code: Protein crossbronx-like (211 aa).

The region spanning 17-177 (NQGYQILAEY…VRNSILWSCK (161 aa)) is the UBC core domain.

It belongs to the ubiquitin-conjugating enzyme family. FTS subfamily.

The sequence is that of Protein crossbronx-like from Drosophila grimshawi (Hawaiian fruit fly).